We begin with the raw amino-acid sequence, 534 residues long: EH domain-containing protein 1 (534 aa).

The residue at position 1 (methionine 1) is an N-acetylmethionine. One can recognise a Dynamin-type G domain in the interval 55–286 (FDNKPMVLLV…DLFKDIQSLP (232 aa)). The segment at 65–72 (GQYSTGKT) is G1 motif. 65-72 (GQYSTGKT) serves as a coordination point for ATP. The tract at residues 91–92 (EP) is G2 motif. Positions 153–156 (DTPG) are G3 motif. Positions 198-227 (DEFSEVIKALKNHEDKIRVVLNKADQIETQ) form a coiled coil. The G4 motif stretch occupies residues 219-222 (NKAD). Lysine 220 provides a ligand contact to ATP. Residue isoleucine 243 is a region of interest, G5 motif. Position 258 (tryptophan 258) interacts with ATP. Residues serine 355 and serine 456 each carry the phosphoserine modification. An EH domain is found at 444–532 (DKPTYDEIFY…PHLVPPSKRR (89 aa)). Residues 476 to 511 (LPNTVLGKIWKLADVDKDGLLDDEEFALANHLIKVK) form the EF-hand domain. Residues aspartate 489, aspartate 491, aspartate 493, and glutamate 500 each coordinate Ca(2+).

This sequence belongs to the TRAFAC class dynamin-like GTPase superfamily. Dynamin/Fzo/YdjA family. EHD subfamily. Homooligomer, and heterooligomer with EHD2, EHD3 and EHD4, ATP-binding is required for heterooligomerization. Interacts (via EH domain) with MICALL1 (via NPF1 motif); the interaction is direct and recruits EHD1 to membranes. Interacts with RAB35; the interaction is indirect through MICALL1 and recruits EHD1 to membranes. Interacts (via EH domain) with PACSIN2 (via NPF motifs); regulates localization to tubular recycling endosome membranes. Interacts with PACSIN1. Interacts with RAB8A. Interacts with FER1L5 (via second C2 domain). Interacts with MYOF. Interacts with ZFYVE20. Interacts (via EH domain) with RAB11FIP2.

The protein resides in the recycling endosome membrane. The protein localises to the early endosome membrane. It localises to the cell membrane. Its subcellular location is the cell projection. It is found in the cilium membrane. ATP- and membrane-binding protein that controls membrane reorganization/tubulation upon ATP hydrolysis. Acts in early endocytic membrane fusion and membrane trafficking of recycling endosomes. Recruited to endosomal membranes upon nerve growth factor stimulation, indirectly regulates neurite outgrowth. Plays a role in myoblast fusion. Involved in the unidirectional retrograde dendritic transport of endocytosed BACE1 and in efficient sorting of BACE1 to axons implicating a function in neuronal APP processing. Plays a role in the formation of the ciliary vesicle (CV), an early step in cilium biogenesis. Proposed to be required for the fusion of distal appendage vesicles (DAVs) to form the CV by recruiting SNARE complex component SNAP29. Is required for recruitment of transition zone proteins CEP290, RPGRIP1L, TMEM67 and B9D2, and of IFT20 following DAV reorganization before Rab8-dependent ciliary membrane extension. Required for the loss of CCP110 form the mother centriole essential for the maturation of the basal body during ciliogenesis. This chain is EH domain-containing protein 1, found in Pongo abelii (Sumatran orangutan).